A 673-amino-acid chain; its full sequence is Transcription initiation factor IIB (673 aa).

A TFIIB-type zinc finger spans residues 38-69 (EEIVCPICGSKEVVKDYERAEIVCAKCGCVIK). The Zn(2+) site is built by C42, C45, C61, and C64. The DOD-type homing endonuclease domain occupies 238–357 (ILGYIIAEGY…VIFLLLQIKE (120 aa)). Repeat copies occupy residues 490–573 (SELD…AREL) and 584–665 (DYVP…ELTE).

It belongs to the TFIIB family. In terms of processing, this protein undergoes a protein self splicing that involves a post-translational excision of the intervening region (intein) followed by peptide ligation.

In terms of biological role, stabilizes TBP binding to an archaeal box-A promoter. Also responsible for recruiting RNA polymerase II to the pre-initiation complex (DNA-TBP-TFIIB). The sequence is that of Transcription initiation factor IIB (tfb) from Methanocaldococcus jannaschii (strain ATCC 43067 / DSM 2661 / JAL-1 / JCM 10045 / NBRC 100440) (Methanococcus jannaschii).